Reading from the N-terminus, the 382-residue chain is UDP-4-amino-4-deoxy-L-arabinose--oxoglutarate aminotransferase (382 aa).

K183 carries the post-translational modification N6-(pyridoxal phosphate)lysine.

Belongs to the DegT/DnrJ/EryC1 family. ArnB subfamily. Homodimer. Pyridoxal 5'-phosphate serves as cofactor.

The catalysed reaction is UDP-4-amino-4-deoxy-beta-L-arabinose + 2-oxoglutarate = UDP-beta-L-threo-pentopyranos-4-ulose + L-glutamate. Its pathway is nucleotide-sugar biosynthesis; UDP-4-deoxy-4-formamido-beta-L-arabinose biosynthesis; UDP-4-deoxy-4-formamido-beta-L-arabinose from UDP-alpha-D-glucuronate: step 2/3. It participates in bacterial outer membrane biogenesis; lipopolysaccharide biosynthesis. Its function is as follows. Catalyzes the conversion of UDP-4-keto-arabinose (UDP-Ara4O) to UDP-4-amino-4-deoxy-L-arabinose (UDP-L-Ara4N). The modified arabinose is attached to lipid A and is required for resistance to polymyxin and cationic antimicrobial peptides. The sequence is that of UDP-4-amino-4-deoxy-L-arabinose--oxoglutarate aminotransferase from Pseudomonas aeruginosa (strain LESB58).